A 305-amino-acid polypeptide reads, in one-letter code: MVRNKKNKYAMHPRNILRVPPDYTKLAIKYRDFRQVCELELTGKVSVNFRNEKTLRELSKMLLKEYFELDVDFAPGSLVPTLALRLNYILWLEDMLLPLNLETVRGIDVGCGSSCIYSLLGAKKNGWNMLALESKEENIDYARENVRRNNLEDLIEVYAQPDKSNIFKSYFETEKLRKEFHFCLCNPPFFDSNSPNPFGGNTRNPQRRPAPNNVRTGSAEELTCEGGEVHFVQRIIEESQLNKQRVLIFTSMLGVKASVPKILDYLKERQITNVTTTEFHQGHTTRWAVAWSHQPTPLSPGTQCN.

Positions 85, 110, 133, 164, and 186 each coordinate S-adenosyl-L-methionine. The disordered stretch occupies residues 194 to 217; the sequence is SPNPFGGNTRNPQRRPAPNNVRTG.

The protein belongs to the methyltransferase superfamily. METTL16/RlmF family.

It carries out the reaction adenosine in U6 snRNA + S-adenosyl-L-methionine = N(6)-methyladenosine in U6 snRNA + S-adenosyl-L-homocysteine + H(+). Functionally, RNA N6-methyltransferase that mediates N6-methylation of adenine of U6 small nuclear RNA (U6 snRNA). In Drosophila pseudoobscura pseudoobscura (Fruit fly), this protein is U6 small nuclear RNA (adenine-(43)-N(6))-methyltransferase.